Reading from the N-terminus, the 684-residue chain is Threonine--tRNA ligase (684 aa).

The TGS domain occupies 1 to 66 (MSTAASPAPA…DADVEVVPVP (66 aa)). The catalytic stretch occupies residues 261-567 (DHRKLGVELD…LTEHYAGAFP (307 aa)). Residues C366, H417, and H544 each coordinate Zn(2+).

It belongs to the class-II aminoacyl-tRNA synthetase family. Homodimer. Zn(2+) is required as a cofactor.

The protein resides in the cytoplasm. It catalyses the reaction tRNA(Thr) + L-threonine + ATP = L-threonyl-tRNA(Thr) + AMP + diphosphate + H(+). Its function is as follows. Catalyzes the attachment of threonine to tRNA(Thr) in a two-step reaction: L-threonine is first activated by ATP to form Thr-AMP and then transferred to the acceptor end of tRNA(Thr). Also edits incorrectly charged L-seryl-tRNA(Thr). This Mycobacterium sp. (strain KMS) protein is Threonine--tRNA ligase.